Reading from the N-terminus, the 235-residue chain is Elongation factor Tu (235 aa).

The tr-type G domain maps to 1 to 125; sequence KNMITGAAQM…EVDEYIPTPE (125 aa). GTP is bound at residue 47–50; the sequence is NKED.

This sequence belongs to the TRAFAC class translation factor GTPase superfamily. Classic translation factor GTPase family. EF-Tu/EF-1A subfamily. As to quaternary structure, monomer.

It localises to the cytoplasm. It carries out the reaction GTP + H2O = GDP + phosphate + H(+). Its function is as follows. GTP hydrolase that promotes the GTP-dependent binding of aminoacyl-tRNA to the A-site of ribosomes during protein biosynthesis. The chain is Elongation factor Tu (tufA) from Gloeothece membranacea (strain PCC 6501 / SAG 26.84).